Reading from the N-terminus, the 349-residue chain is Paired box protein Pax-4 (349 aa).

Positions 5 to 131 (GLSSVNQLGG…SSINRVLRAL (127 aa)) form a DNA-binding region, paired. The tract at residues 8–64 (SVNQLGGLFVNGRPLPLDTRQQIVQLAIRGMRPCDISRSLKVSNGCVSKILGRYYRT) is PAI subdomain. The interval 83–131 (AVVARIAQLKDEYPALFAWEIQRQLCAEGLCTQDKAPSVSSINRVLRAL) is RED subdomain. Residues 170–229 (SHRNRTIFSPGQAEALEKEFQRGQYPDSVVRGKLAAATSLPEDTVRVWFSNRRAKWRRQE) constitute a DNA-binding region (homeobox). The transcription repression stretch occupies residues 278 to 349 (FCQLCWGAVP…APSTYYLHWP (72 aa)).

Belongs to the paired homeobox family. As to expression, specifically expressed in pancreatic islets.

It is found in the nucleus. Functionally, plays an important role in the differentiation and development of pancreatic islet beta cells. Transcriptional repressor that competes with PAX6 in binding to a common element in the glucagon, insulin and somatostatin promoters. The chain is Paired box protein Pax-4 (Pax4) from Rattus norvegicus (Rat).